Reading from the N-terminus, the 243-residue chain is MFNPNNGSEFARNRARLDDTPNPYEPEVGSLPEGDRSQAGSDTVNKTGTTIVGLTTQDGVLMASDMRASLGGRVISNKNVQKVEEIQPNAALSISGSVGGAQSFIRSLRAEANLYEARRGEYMSIDALSTMASNLLRGGPFFRVVPILGGVDDDGGHVFSLDPAGSSMSDTYTAQGSGMPYALGVLEQEYSEDLTMADAEQVAAHAVKSASERDTASGNGIHITKITHDGLTTVGHKEFDALL.

Residues 1-46 (MFNPNNGSEFARNRARLDDTPNPYEPEVGSLPEGDRSQAGSDTVNK) are disordered. Positions 1 to 48 (MFNPNNGSEFARNRARLDDTPNPYEPEVGSLPEGDRSQAGSDTVNKTG) are cleaved as a propeptide — removed in mature form; by autocatalysis. T49 serves as the catalytic Nucleophile.

Belongs to the peptidase T1B family. As to quaternary structure, the 20S proteasome core is composed of 14 alpha and 14 beta subunits that assemble into four stacked heptameric rings, resulting in a barrel-shaped structure. The two inner rings, each composed of seven catalytic beta subunits, are sandwiched by two outer rings, each composed of seven alpha subunits. The catalytic chamber with the active sites is on the inside of the barrel. Has a gated structure, the ends of the cylinder being occluded by the N-termini of the alpha-subunits. Is capped at one or both ends by the proteasome regulatory ATPase, PAN.

It is found in the cytoplasm. The catalysed reaction is Cleavage of peptide bonds with very broad specificity.. With respect to regulation, the formation of the proteasomal ATPase PAN-20S proteasome complex, via the docking of the C-termini of PAN into the intersubunit pockets in the alpha-rings, triggers opening of the gate for substrate entry. Interconversion between the open-gate and close-gate conformations leads to a dynamic regulation of the 20S proteasome proteolysis activity. In terms of biological role, component of the proteasome core, a large protease complex with broad specificity involved in protein degradation. The chain is Proteasome subunit beta from Halobacterium salinarum (strain ATCC 29341 / DSM 671 / R1).